Reading from the N-terminus, the 38-residue chain is Large ribosomal subunit protein bL36 (38 aa).

This sequence belongs to the bacterial ribosomal protein bL36 family.

The protein is Large ribosomal subunit protein bL36 of Chlorobium limicola (strain DSM 245 / NBRC 103803 / 6330).